An 868-amino-acid polypeptide reads, in one-letter code: V-set and immunoglobulin domain-containing protein 10-like (868 aa).

The N-terminal stretch at 1–27 (MGLSWALLPFLLLAFRAELLALQPALG) is a signal peptide. Residues 26 to 52 (LGSQPPSASSSHSMGSSRDFVSNVSSS) are compositionally biased toward low complexity. Residues 26–82 (LGSQPPSASSSHSMGSSRDFVSNVSSSQHPQPPGSEASAGIPDSNRFPQGLNSSHVP) are disordered. At 28–763 (SQPPSASSSH…QAGSDLSPGA (736 aa)) the chain is on the extracellular side. 3 N-linked (GlcNAc...) asparagine glycosylation sites follow: Asn48, Asn77, and Asn88. Residues 71–80 (RFPQGLNSSH) show a composition bias toward polar residues. Disordered stretches follow at residues 96–154 (LSPD…SGSK) and 323–342 (WSRD…EPPR). 2 stretches are compositionally biased toward polar residues: residues 99–108 (DVTSSETPPS) and 133–143 (PASQISVQTPD). 2 consecutive Ig-like C2-type domains span residues 289–381 (PQLS…ADVS) and 389–474 (PVIR…SVFN). Cysteines 311 and 365 form a disulfide. N-linked (GlcNAc...) asparagine glycosylation occurs at Asn410. Cysteines 415 and 458 form a disulfide. Residues Asn474, Asn628, and Asn637 are each glycosylated (N-linked (GlcNAc...) asparagine). Residues 764-784 (IAGIVLGSLLGLALLAGLLIL) form a helical membrane-spanning segment. Residues 785–868 (CICCLRRYPG…PWTVRAATQV (84 aa)) lie on the Cytoplasmic side of the membrane.

The protein localises to the membrane. The chain is V-set and immunoglobulin domain-containing protein 10-like (Vsig10l) from Mus musculus (Mouse).